Reading from the N-terminus, the 505-residue chain is ATP synthase subunit alpha (505 aa).

171 to 178 (GDRQTGKT) contributes to the ATP binding site.

This sequence belongs to the ATPase alpha/beta chains family. As to quaternary structure, F-type ATPases have 2 components, CF(1) - the catalytic core - and CF(0) - the membrane proton channel. CF(1) has five subunits: alpha(3), beta(3), gamma(1), delta(1), epsilon(1). CF(0) has three main subunits: a(1), b(2) and c(9-12). The alpha and beta chains form an alternating ring which encloses part of the gamma chain. CF(1) is attached to CF(0) by a central stalk formed by the gamma and epsilon chains, while a peripheral stalk is formed by the delta and b chains.

The protein resides in the cell inner membrane. It carries out the reaction ATP + H2O + 4 H(+)(in) = ADP + phosphate + 5 H(+)(out). In terms of biological role, produces ATP from ADP in the presence of a proton gradient across the membrane. The alpha chain is a regulatory subunit. The sequence is that of ATP synthase subunit alpha from Campylobacter concisus (strain 13826).